A 181-amino-acid polypeptide reads, in one-letter code: Large ribosomal subunit protein uL5 (181 aa).

It belongs to the universal ribosomal protein uL5 family. In terms of assembly, part of the 50S ribosomal subunit; part of the 5S rRNA/L5/L18/L25 subcomplex. Contacts the 5S rRNA and the P site tRNA. Forms a bridge to the 30S subunit in the 70S ribosome.

Functionally, this is one of the proteins that bind and probably mediate the attachment of the 5S RNA into the large ribosomal subunit, where it forms part of the central protuberance. In the 70S ribosome it contacts protein S13 of the 30S subunit (bridge B1b), connecting the 2 subunits; this bridge is implicated in subunit movement. Contacts the P site tRNA; the 5S rRNA and some of its associated proteins might help stabilize positioning of ribosome-bound tRNAs. In Campylobacter hominis (strain ATCC BAA-381 / DSM 21671 / CCUG 45161 / LMG 19568 / NCTC 13146 / CH001A), this protein is Large ribosomal subunit protein uL5.